A 46-amino-acid chain; its full sequence is EKGFGFLTQNNGGADVFVHFRAIASEGFKTLTEGQKVSFDVEQGQK.

Residues 1–46 enclose the CSD domain; that stretch reads EKGFGFLTQNNGGADVFVHFRAIASEGFKTLTEGQKVSFDVEQGQK.

In terms of assembly, homodimer.

Its subcellular location is the cytoplasm. This chain is Major cold shock protein (cspA), found in Photobacterium leiognathi subsp. mandapamensis (Photobacterium mandapamensis).